We begin with the raw amino-acid sequence, 470 residues long: 3-isopropylmalate dehydratase large subunit (470 aa).

Residues Cys349, Cys409, and Cys412 each coordinate [4Fe-4S] cluster.

It belongs to the aconitase/IPM isomerase family. LeuC type 1 subfamily. As to quaternary structure, heterodimer of LeuC and LeuD. [4Fe-4S] cluster serves as cofactor.

It carries out the reaction (2R,3S)-3-isopropylmalate = (2S)-2-isopropylmalate. It participates in amino-acid biosynthesis; L-leucine biosynthesis; L-leucine from 3-methyl-2-oxobutanoate: step 2/4. Its function is as follows. Catalyzes the isomerization between 2-isopropylmalate and 3-isopropylmalate, via the formation of 2-isopropylmaleate. This Campylobacter jejuni subsp. jejuni serotype O:2 (strain ATCC 700819 / NCTC 11168) protein is 3-isopropylmalate dehydratase large subunit.